The primary structure comprises 1091 residues: AP-3 complex subunit beta-1 (1091 aa).

Disordered stretches follow at residues 1–32 (MSGN…SPSG) and 267–290 (EDNE…KKKP). Residues 267 to 288 (EDNEKNFYESDDEQKEKTDQKK) are compositionally biased toward basic and acidic residues. Residues S276 and S609 each carry the phosphoserine modification. Residues 664–807 (AGKAKKENPA…EKEKKTKEDR (144 aa)) are disordered. A compositionally biased stretch (basic and acidic residues) spans 667–678 (AKKENPARKFYS). 2 stretches are compositionally biased toward acidic residues: residues 679–695 (DSEE…DSES) and 703–718 (EQDE…SEDS). A compositionally biased stretch (basic and acidic residues) spans 719–736 (SSEHRSDSESVSEVGDKR). Phosphoserine is present on residues S748 and S750. Residues 763 to 775 (SDSSSTDSSSVEE) are compositionally biased toward low complexity. Acidic residues predominate over residues 776–789 (SSSDSESESESESE). Basic and acidic residues predominate over residues 790–807 (SESKKVTMEKEKKTKEDR).

Belongs to the adaptor complexes large subunit family. As to quaternary structure, adaptor protein complex 3 (AP-3) is a heterotetramer composed of two large adaptins (delta-type subunit AP3D1 and beta-type subunit AP3B1 or AP3B2), a medium adaptin (mu-type subunit AP3M1 or AP3M2) and a small adaptin (sigma-type subunit APS1 or AP3S2). AP-3 associates with the BLOC-1 complex. Interacts with KIF3A; interaction is direct; interaction is impaired by pyrophosphorylation of AP3B1. Phosphorylated on serine residues. Post-translationally, pyrophosphorylation by 5-diphosphoinositol pentakisphosphate (5-IP7) impairs interaction with KIF3A. Serine pyrophosphorylation is achieved by Mg(2+)-dependent, but enzyme independent transfer of a beta-phosphate from a inositol pyrophosphate to a pre-phosphorylated serine residue.

Its subcellular location is the cytoplasmic vesicle. It is found in the clathrin-coated vesicle membrane. The protein resides in the golgi apparatus. Functionally, subunit of non-clathrin- and clathrin-associated adaptor protein complex 3 (AP-3) that plays a role in protein sorting in the late-Golgi/trans-Golgi network (TGN) and/or endosomes. The AP complexes mediate both the recruitment of clathrin to membranes and the recognition of sorting signals within the cytosolic tails of transmembrane cargo molecules. AP-3 appears to be involved in the sorting of a subset of transmembrane proteins targeted to lysosomes and lysosome-related organelles. In concert with the BLOC-1 complex, AP-3 is required to target cargos into vesicles assembled at cell bodies for delivery into neurites and nerve terminals. The polypeptide is AP-3 complex subunit beta-1 (AP3B1) (Canis lupus familiaris (Dog)).